Here is a 926-residue protein sequence, read N- to C-terminus: Serine/threonine-protein kinase/endoribonuclease IRE2 (926 aa).

Positions 1-34 are cleaved as a signal peptide; it reads MASAVRGSRPWPRLGLQLQFAALLLGTLSPQVHT. The Lumenal segment spans residues 35-430; that stretch reads LRPENLLLVS…TPDSYLGLGP (396 aa). A helical membrane pass occupies residues 431-451; it reads QDLLAASLTAVLLGGWILFVM. Residues 452–926 lie on the Cytoplasmic side of the membrane; that stretch reads RQQQPQVVEK…RRPCPGATGR (475 aa). Residues 478–501 show a composition bias toward polar residues; that stretch reads DAQSLHSGASRRSQKRLQSPSKQA. The disordered stretch occupies residues 478 to 509; that stretch reads DAQSLHSGASRRSQKRLQSPSKQAQPLDDPEA. The region spanning 520 to 781 is the Protein kinase domain; sequence FNPKDVLGRG…APQVLAHPFF (262 aa). ATP is bound by residues 526–534 and K548; that span reads LGRGAGGTF. The active-site Proton acceptor is the D637. Residues 784-912 form the KEN domain; that stretch reads RAKQLQFFQD…ESLFLPYYPP (129 aa).

It belongs to the protein kinase superfamily. Ser/Thr protein kinase family. The cofactor is Mg(2+). In terms of processing, autophosphorylated.

It localises to the endoplasmic reticulum membrane. The catalysed reaction is L-seryl-[protein] + ATP = O-phospho-L-seryl-[protein] + ADP + H(+). It catalyses the reaction L-threonyl-[protein] + ATP = O-phospho-L-threonyl-[protein] + ADP + H(+). Its activity is regulated as follows. The kinase domain is activated by trans-autophosphorylation. Kinase activity is required for activation of the endoribonuclease domain. Induces translational repression through 28S ribosomal RNA cleavage in response to ER stress. Pro-apoptotic. Appears to play no role in the unfolded-protein response, unlike closely related proteins. This chain is Serine/threonine-protein kinase/endoribonuclease IRE2, found in Homo sapiens (Human).